The primary structure comprises 98 residues: Co-chaperonin GroES (98 aa).

The protein belongs to the GroES chaperonin family. As to quaternary structure, heptamer of 7 subunits arranged in a ring. Interacts with the chaperonin GroEL.

It localises to the cytoplasm. Its function is as follows. Together with the chaperonin GroEL, plays an essential role in assisting protein folding. The GroEL-GroES system forms a nano-cage that allows encapsulation of the non-native substrate proteins and provides a physical environment optimized to promote and accelerate protein folding. GroES binds to the apical surface of the GroEL ring, thereby capping the opening of the GroEL channel. This chain is Co-chaperonin GroES, found in Bartonella tribocorum (strain CIP 105476 / IBS 506).